Here is a 141-residue protein sequence, read N- to C-terminus: Nucleoside diphosphate kinase (141 aa).

ATP-binding residues include K11, F59, R87, T93, R104, and N114. Residue H117 is the Pros-phosphohistidine intermediate of the active site.

The protein belongs to the NDK family. As to quaternary structure, homotetramer. Mg(2+) is required as a cofactor.

The protein resides in the cytoplasm. It carries out the reaction a 2'-deoxyribonucleoside 5'-diphosphate + ATP = a 2'-deoxyribonucleoside 5'-triphosphate + ADP. The enzyme catalyses a ribonucleoside 5'-diphosphate + ATP = a ribonucleoside 5'-triphosphate + ADP. Its function is as follows. Major role in the synthesis of nucleoside triphosphates other than ATP. The ATP gamma phosphate is transferred to the NDP beta phosphate via a ping-pong mechanism, using a phosphorylated active-site intermediate. The sequence is that of Nucleoside diphosphate kinase from Burkholderia multivorans (strain ATCC 17616 / 249).